We begin with the raw amino-acid sequence, 493 residues long: GTPase Der (493 aa).

EngA-type G domains lie at 3 to 166 (PVVA…AEAL) and 206 to 379 (IKLA…KSAT). GTP is bound by residues 9–16 (GRPNVGKS), 56–60 (DTGGI), 118–121 (NKVD), 212–219 (GRPNVGKS), 259–263 (DTAGV), and 324–327 (NKWD). The KH-like domain maps to 380–464 (TRVGTSVLTR…PIRIQFQNSE (85 aa)).

Belongs to the TRAFAC class TrmE-Era-EngA-EngB-Septin-like GTPase superfamily. EngA (Der) GTPase family. Associates with the 50S ribosomal subunit.

Functionally, GTPase that plays an essential role in the late steps of ribosome biogenesis. The chain is GTPase Der from Vibrio atlanticus (strain LGP32) (Vibrio splendidus (strain Mel32)).